A 357-amino-acid chain; its full sequence is UDP-arabinopyranose mutase 1 (357 aa).

The residue at position 2 (valine 2) is an N-acetylvaline. The DXD motif signature appears at 110–112 (DDD). A glycan (N-linked (Glc...) arginine) is linked at arginine 158.

The protein belongs to the RGP family. In terms of assembly, heteromers with RGP2, RGP3, RGP4 and RGP5. It depends on Mn(2+) as a cofactor. Mg(2+) is required as a cofactor. Reversibly glycosylated in vitro by UDP-glucose, UDP-xylose and UDP-galactose, but not UDP-mannose. As to expression, predominantly expressed in shoot and root apical meristems. Expressed in epidermal cells of leaves, inflorescence stems and seed coat. Expressed in pollen.

The protein resides in the cytoplasm. The protein localises to the cytosol. It localises to the golgi apparatus. The enzyme catalyses UDP-beta-L-arabinofuranose = UDP-beta-L-arabinopyranose. Functionally, UDP-L-arabinose mutase involved in the biosynthesis of cell wall non-cellulosic polysaccharides. Catalyzes the interconvertion of UDP-L-arabinopyranose (UDP-Arap) and UDP-L-arabinofuranose (UDP-Araf) in vitro. Preferentially catalyzes the formation of UDP-Arap from UDP-Araf. At thermodynamic equilibrium in vitro the ratio of the pyranose form over the furanose form is 95:5. Is not active on other UDP-sugars (UDP-Gal, UDP-Xyl, UDP-Glc, GDP-Man and GDP-Fuc). Functions redundantly with RGP2 and is essential for proper cell walls and pollen development. Probably involved in the formation of the pectocellulosic cell wall layer intine. Is probably active as heteromer in vivo. This chain is UDP-arabinopyranose mutase 1, found in Arabidopsis thaliana (Mouse-ear cress).